Consider the following 491-residue polypeptide: MTDLTSLTLAEARKGLAAKTFTSLELTDAHLSAIEAARVLNAFVMETPDRARDMAREADGKIAKGDAGPLAGIPLGMTDLFATKGVRTTACSKILGNFVPTYESTVTSQLWRDGAVMLGKLNNDEFAMGSANETSCFGPVGNPWRREGSNTTLVPGGSSGGSASAVAALLCMGATATDTGGSIRQPAAFTATVGIKPTYGRCSRWGIVAFASSLDQAGPIARSVRDSAMLLRSMAGHDPKDTTSVDIPVPDYEAAIGKSVKGIRIGIPKEYRLDGMPAEIEKLWSEGAAWLKAAGAELVEVSLPHTKYALPAYYIVAPAEASSNLARYDGVRYGLREQGKNIIELYENTRAEGFGAEVRRRVMIGTYVLSAGYYDAYYLRAQKVRTLIKKDFEDCFAKGVNAILTPATPSAAFGIGEKGGADPVEMYLNDIFTVTVNMAGLPGIAVPAGKDAQGLPLGLQLIGRPFDEETLFSLGEVIEQAAGRFTPARWW.

Catalysis depends on S158, which acts as the Charge relay system. S182 functions as the Acyl-ester intermediate in the catalytic mechanism.

It belongs to the amidase family. GatA subfamily. In terms of assembly, heterotrimer of A, B and C subunits.

The catalysed reaction is L-glutamyl-tRNA(Gln) + L-glutamine + ATP + H2O = L-glutaminyl-tRNA(Gln) + L-glutamate + ADP + phosphate + H(+). Allows the formation of correctly charged Gln-tRNA(Gln) through the transamidation of misacylated Glu-tRNA(Gln) in organisms which lack glutaminyl-tRNA synthetase. The reaction takes place in the presence of glutamine and ATP through an activated gamma-phospho-Glu-tRNA(Gln). The polypeptide is Glutamyl-tRNA(Gln) amidotransferase subunit A (Bradyrhizobium diazoefficiens (strain JCM 10833 / BCRC 13528 / IAM 13628 / NBRC 14792 / USDA 110)).